Here is a 166-residue protein sequence, read N- to C-terminus: Lipoprotein signal peptidase (166 aa).

3 helical membrane-spanning segments follow: residues 10 to 30 (LIWLLLSALVIGLDQWSKAWV), 68 to 88 (WQLWFFTALAMGISGLLAFWL), and 94 to 114 (GHWRSALPYALVIGGAIGNVI). Residues aspartate 124 and aspartate 142 contribute to the active site. The chain crosses the membrane as a helical span at residues 138 to 158 (FNIADSAIVGGAIGIAVFGLF).

It belongs to the peptidase A8 family.

The protein resides in the cell inner membrane. The enzyme catalyses Release of signal peptides from bacterial membrane prolipoproteins. Hydrolyzes -Xaa-Yaa-Zaa-|-(S,diacylglyceryl)Cys-, in which Xaa is hydrophobic (preferably Leu), and Yaa (Ala or Ser) and Zaa (Gly or Ala) have small, neutral side chains.. It participates in protein modification; lipoprotein biosynthesis (signal peptide cleavage). This protein specifically catalyzes the removal of signal peptides from prolipoproteins. This Xanthomonas oryzae pv. oryzae (strain MAFF 311018) protein is Lipoprotein signal peptidase.